A 274-amino-acid chain; its full sequence is CTO1 family protein C17G9.12c (274 aa).

Belongs to the CTO1 family.

It localises to the cytoplasm. The protein localises to the nucleus. The polypeptide is CTO1 family protein C17G9.12c (Schizosaccharomyces pombe (strain 972 / ATCC 24843) (Fission yeast)).